Here is a 247-residue protein sequence, read N- to C-terminus: Carboxy-S-adenosyl-L-methionine synthase (247 aa).

Residues Y40, 65-67, 90-91, 122-123, N137, and R204 each bind S-adenosyl-L-methionine; these read GSS, DN, and DI.

This sequence belongs to the class I-like SAM-binding methyltransferase superfamily. Cx-SAM synthase family. In terms of assembly, homodimer.

The catalysed reaction is prephenate + S-adenosyl-L-methionine = carboxy-S-adenosyl-L-methionine + 3-phenylpyruvate + H2O. Catalyzes the conversion of S-adenosyl-L-methionine (SAM) to carboxy-S-adenosyl-L-methionine (Cx-SAM). In Pseudomonas fluorescens (strain ATCC BAA-477 / NRRL B-23932 / Pf-5), this protein is Carboxy-S-adenosyl-L-methionine synthase.